Here is a 301-residue protein sequence, read N- to C-terminus: Putative carboxypeptidase slr1534 (301 aa).

Ser116 serves as the catalytic Nucleophile. Active-site charge relay system residues include Glu206 and His276.

It belongs to the peptidase S66 family.

The protein is Putative carboxypeptidase slr1534 of Synechocystis sp. (strain ATCC 27184 / PCC 6803 / Kazusa).